The following is a 378-amino-acid chain: Spermidine/putrescine import ATP-binding protein PotA (378 aa).

Residues 18–248 (VQLAGIRKCF…PKNLFVTGFI (231 aa)) enclose the ABC transporter domain. Residue 50 to 57 (GPSGCGKT) coordinates ATP.

This sequence belongs to the ABC transporter superfamily. Spermidine/putrescine importer (TC 3.A.1.11.1) family. As to quaternary structure, the complex is composed of two ATP-binding proteins (PotA), two transmembrane proteins (PotB and PotC) and a solute-binding protein (PotD).

The protein resides in the cell inner membrane. The enzyme catalyses ATP + H2O + polyamine-[polyamine-binding protein]Side 1 = ADP + phosphate + polyamineSide 2 + [polyamine-binding protein]Side 1.. Its function is as follows. Part of the ABC transporter complex PotABCD involved in spermidine/putrescine import. Responsible for energy coupling to the transport system. In Shigella flexneri serotype 5b (strain 8401), this protein is Spermidine/putrescine import ATP-binding protein PotA.